Reading from the N-terminus, the 268-residue chain is ClpXP adapter protein SpxH (268 aa).

This sequence belongs to the SpxH family. Interacts with Spx.

Its subcellular location is the cytoplasm. Adapter protein required for efficient degradation of Spx by ClpXP under non-stress conditions. Interaction with Spx stabilizes Spx and exposes the C-terminus of Spx for recognition and proteolysis by ClpXP. The protein is ClpXP adapter protein SpxH of Staphylococcus aureus (strain MRSA252).